A 35-amino-acid chain; its full sequence is Augerpeptide hheTx5 (35 aa).

Post-translationally, contains 4 disulfide bonds. In terms of tissue distribution, expressed by the venom duct.

The protein localises to the secreted. This chain is Augerpeptide hheTx5, found in Hastula hectica (Sea snail).